Reading from the N-terminus, the 134-residue chain is 15.4 kDa class V heat shock protein (134 aa).

Positions 19 to 126 (SLNNYQENHV…LIDPSDVPES (108 aa)) constitute a sHSP domain.

This sequence belongs to the small heat shock protein (HSP20) family. In terms of assembly, may form oligomeric structures.

Its subcellular location is the cytoplasm. This chain is 15.4 kDa class V heat shock protein (HSP15.4), found in Arabidopsis thaliana (Mouse-ear cress).